Consider the following 36-residue polypeptide: Glucagon (36 aa).

Belongs to the glucagon family. In terms of tissue distribution, produced by the X-cells of the islets of pancreas.

It is found in the secreted. Promotes hydrolysis of glycogen and lipids, and raises the blood sugar level. This is Glucagon (gcg) from Hydrolagus colliei (Spotted ratfish).